A 321-amino-acid chain; its full sequence is Acetyl-coenzyme A carboxylase carboxyl transferase subunit alpha (321 aa).

Residues 37-298 (DLDDEIKRLQ…KQRILSDLED (262 aa)) form the CoA carboxyltransferase C-terminal domain.

Belongs to the AccA family. In terms of assembly, acetyl-CoA carboxylase is a heterohexamer composed of biotin carboxyl carrier protein (AccB), biotin carboxylase (AccC) and two subunits each of ACCase subunit alpha (AccA) and ACCase subunit beta (AccD).

It localises to the cytoplasm. It catalyses the reaction N(6)-carboxybiotinyl-L-lysyl-[protein] + acetyl-CoA = N(6)-biotinyl-L-lysyl-[protein] + malonyl-CoA. The protein operates within lipid metabolism; malonyl-CoA biosynthesis; malonyl-CoA from acetyl-CoA: step 1/1. In terms of biological role, component of the acetyl coenzyme A carboxylase (ACC) complex. First, biotin carboxylase catalyzes the carboxylation of biotin on its carrier protein (BCCP) and then the CO(2) group is transferred by the carboxyltransferase to acetyl-CoA to form malonyl-CoA. This is Acetyl-coenzyme A carboxylase carboxyl transferase subunit alpha from Mannheimia succiniciproducens (strain KCTC 0769BP / MBEL55E).